The chain runs to 692 residues: Elongation factor G (692 aa).

The region spanning 8–282 is the tr-type G domain; sequence ENTRNIGIMA…AVIDYLPSPL (275 aa). GTP is bound by residues 17-24, 81-85, and 135-138; these read AHIDAGKT, DTPGH, and NKMD.

It belongs to the TRAFAC class translation factor GTPase superfamily. Classic translation factor GTPase family. EF-G/EF-2 subfamily.

The protein localises to the cytoplasm. Functionally, catalyzes the GTP-dependent ribosomal translocation step during translation elongation. During this step, the ribosome changes from the pre-translocational (PRE) to the post-translocational (POST) state as the newly formed A-site-bound peptidyl-tRNA and P-site-bound deacylated tRNA move to the P and E sites, respectively. Catalyzes the coordinated movement of the two tRNA molecules, the mRNA and conformational changes in the ribosome. This chain is Elongation factor G, found in Bacillus cereus (strain ATCC 14579 / DSM 31 / CCUG 7414 / JCM 2152 / NBRC 15305 / NCIMB 9373 / NCTC 2599 / NRRL B-3711).